Reading from the N-terminus, the 134-residue chain is MTLNLCVLTPNRILWDSEVKEIILPTNSGQIGVLPNHASIVTTIDIGVLRIRHFNDQWFTIALMGGFTRIRNNEITILATAAEKGSDIDPQEAQQTLQIAEDSLRKAEDKRQRIEAKLAIKRASTRVKAINPIS.

It belongs to the ATPase epsilon chain family. F-type ATPases have 2 components, CF(1) - the catalytic core - and CF(0) - the membrane proton channel. CF(1) has five subunits: alpha(3), beta(3), gamma(1), delta(1), epsilon(1). CF(0) has three main subunits: a, b and c.

It is found in the plastid. Its subcellular location is the chloroplast thylakoid membrane. Produces ATP from ADP in the presence of a proton gradient across the membrane. The sequence is that of ATP synthase epsilon chain, chloroplastic from Pelargonium hortorum (Common geranium).